A 185-amino-acid polypeptide reads, in one-letter code: Peptidyl-tRNA hydrolase (185 aa).

Tyr-14 is a tRNA binding site. His-19 serves as the catalytic Proton acceptor. Residues Phe-64, Asn-66, and Asn-112 each coordinate tRNA.

Belongs to the PTH family. Monomer.

It localises to the cytoplasm. It carries out the reaction an N-acyl-L-alpha-aminoacyl-tRNA + H2O = an N-acyl-L-amino acid + a tRNA + H(+). In terms of biological role, hydrolyzes ribosome-free peptidyl-tRNAs (with 1 or more amino acids incorporated), which drop off the ribosome during protein synthesis, or as a result of ribosome stalling. Catalyzes the release of premature peptidyl moieties from peptidyl-tRNA molecules trapped in stalled 50S ribosomal subunits, and thus maintains levels of free tRNAs and 50S ribosomes. The polypeptide is Peptidyl-tRNA hydrolase (Lacticaseibacillus casei (strain BL23) (Lactobacillus casei)).